We begin with the raw amino-acid sequence, 253 residues long: 3-deoxy-manno-octulosonate cytidylyltransferase (253 aa).

Belongs to the KdsB family.

The protein localises to the cytoplasm. The catalysed reaction is 3-deoxy-alpha-D-manno-oct-2-ulosonate + CTP = CMP-3-deoxy-beta-D-manno-octulosonate + diphosphate. Its pathway is nucleotide-sugar biosynthesis; CMP-3-deoxy-D-manno-octulosonate biosynthesis; CMP-3-deoxy-D-manno-octulosonate from 3-deoxy-D-manno-octulosonate and CTP: step 1/1. The protein operates within bacterial outer membrane biogenesis; lipopolysaccharide biosynthesis. Its function is as follows. Activates KDO (a required 8-carbon sugar) for incorporation into bacterial lipopolysaccharide in Gram-negative bacteria. This Edwardsiella ictaluri (strain 93-146) protein is 3-deoxy-manno-octulosonate cytidylyltransferase.